The sequence spans 296 residues: Glycine N-acyltransferase (296 aa).

K16 bears the N6-acetyllysine; alternate mark. At K16 the chain carries N6-succinyllysine; alternate. Residue K113 is modified to N6-acetyllysine. An N6-acetyllysine; alternate mark is found at K127, K141, and K142. An N6-succinyllysine; alternate mark is found at K127, K141, and K142. 2 positions are modified to N6-acetyllysine: K159 and K167. Position 169 is an N6-succinyllysine (K169). An N6-acetyllysine; alternate mark is found at K183 and K256. Residues K183 and K256 each carry the N6-succinyllysine; alternate modification. K267 is modified (N6-succinyllysine).

The protein belongs to the glycine N-acyltransferase family.

The protein resides in the mitochondrion. It carries out the reaction an acyl-CoA + glycine = an N-acylglycine + CoA + H(+). It catalyses the reaction benzoyl-CoA + glycine = N-benzoylglycine + CoA + H(+). Its function is as follows. Mitochondrial acyltransferase which transfers an acyl group to the N-terminus of glycine and glutamine, although much less efficiently. Can conjugate a multitude of substrates to form a variety of N-acylglycines, thereby detoxify xenobiotics, such as benzoic acid or salicylic acid, and endogenous organic acids, such as isovaleric acid. The polypeptide is Glycine N-acyltransferase (Glyat) (Mus musculus (Mouse)).